Consider the following 425-residue polypeptide: Histidine--tRNA ligase (425 aa).

This sequence belongs to the class-II aminoacyl-tRNA synthetase family. In terms of assembly, homodimer.

The protein localises to the cytoplasm. It catalyses the reaction tRNA(His) + L-histidine + ATP = L-histidyl-tRNA(His) + AMP + diphosphate + H(+). The chain is Histidine--tRNA ligase from Chlorobium chlorochromatii (strain CaD3).